Reading from the N-terminus, the 395-residue chain is Succinyl-diaminopimelate desuccinylase (395 aa).

Histidine 74 contacts Zn(2+). Aspartate 76 is an active-site residue. Position 107 (aspartate 107) interacts with Zn(2+). Glutamate 141 (proton acceptor) is an active-site residue. Residues glutamate 142, glutamate 170, and histidine 368 each coordinate Zn(2+).

Belongs to the peptidase M20A family. DapE subfamily. In terms of assembly, homodimer. It depends on Zn(2+) as a cofactor. Co(2+) is required as a cofactor.

It catalyses the reaction N-succinyl-(2S,6S)-2,6-diaminopimelate + H2O = (2S,6S)-2,6-diaminopimelate + succinate. It functions in the pathway amino-acid biosynthesis; L-lysine biosynthesis via DAP pathway; LL-2,6-diaminopimelate from (S)-tetrahydrodipicolinate (succinylase route): step 3/3. Catalyzes the hydrolysis of N-succinyl-L,L-diaminopimelic acid (SDAP), forming succinate and LL-2,6-diaminopimelate (DAP), an intermediate involved in the bacterial biosynthesis of lysine and meso-diaminopimelic acid, an essential component of bacterial cell walls. In Brucella melitensis biotype 2 (strain ATCC 23457), this protein is Succinyl-diaminopimelate desuccinylase.